Here is a 24-residue protein sequence, read N- to C-terminus: Cryptonin (24 aa).

Antimicrobial peptide, active against the Gram-negative bacterium E.coli K12-594 (MIC=3.12 ug/ml), the Gram-positive bacteria B.subtilis KCTC 3086 (MIC=3.12 ug/ml), S.aureus KCTC 1928 (MIC=25 ug/ml) and M.luteus KCTC 3063 (MIC=1.56 ug/ml), the antibiotic resistant bacteria methicillin-resistant S.aureus (MRSA) (MIC=25 ug/ml) and vancomycin-resistant Enterococci (VRE) (MIC=25 ug/ml), and the fungi C.albicans KCTC 7965 (MIC=50 ug/ml) and C.tropicalis KCTC 1925 (MIC=3.12 ug/ml). Has very low hemolytic activity on rat erythrocytes. The sequence is that of Cryptonin from Cryptotympana dubia (Korean horse cicada).